The sequence spans 262 residues: MEHLERCAWVLRGTLVRSAVRKYLPWALAASMLAGSLLKELSPLPESYLSNKRNVLNVYFVKVAWAWTFCLLLPFIALTNYHLTGKAGLVLRRLSTLLVGTAIWYVCTAIFSNIEHYTGSCYQSPALEGERKEHQSKQQCHGEGGFWHGFDISGHSFLLTFCALMIVEEMAVLHEVKTDRNHCLHAAITTLVVALGFLTFIWVWMFLCTAVYFHNLSQKVFGTLFGLLGWYGTYGCWYLKSFSPGLPPQSSSLNLKQDTYKK.

Residues 1-23 (MEHLERCAWVLRGTLVRSAVRKY) are Cytoplasmic-facing. The helical transmembrane segment at 24–44 (LPWALAASMLAGSLLKELSPL) threads the bilayer. Residues 45–57 (PESYLSNKRNVLN) are Lumenal-facing. The helical transmembrane segment at 58–78 (VYFVKVAWAWTFCLLLPFIAL) threads the bilayer. The Cytoplasmic portion of the chain corresponds to 79–93 (TNYHLTGKAGLVLRR). The chain crosses the membrane as a helical span at residues 94–114 (LSTLLVGTAIWYVCTAIFSNI). Topologically, residues 115–145 (EHYTGSCYQSPALEGERKEHQSKQQCHGEGG) are lumenal. Residues 146–166 (FWHGFDISGHSFLLTFCALMI) form a helical membrane-spanning segment. His-155 is a catalytic residue. Residues 167–190 (VEEMAVLHEVKTDRNHCLHAAITT) lie on the Cytoplasmic side of the membrane. Residues 191 to 211 (LVVALGFLTFIWVWMFLCTAV) form a helical membrane-spanning segment. At 212 to 218 (YFHNLSQ) the chain is on the lumenal side. His-214 is a catalytic residue. The helical transmembrane segment at 219 to 239 (KVFGTLFGLLGWYGTYGCWYL) threads the bilayer. Residues 240-262 (KSFSPGLPPQSSSLNLKQDTYKK) lie on the Cytoplasmic side of the membrane.

It belongs to the FIT family. FIT2 subfamily.

The protein resides in the endoplasmic reticulum membrane. The catalysed reaction is an acyl-CoA + H2O = an acyl-4'-phosphopantetheine + adenosine 3',5'-bisphosphate + 2 H(+). It catalyses the reaction (9Z)-octadecenoyl-CoA + H2O = S-(9Z-octadecenoyl)-4'-phosphopantetheine + adenosine 3',5'-bisphosphate + 2 H(+). The enzyme catalyses (5Z,8Z,11Z,14Z)-eicosatetraenoyl-CoA + H2O = S-(5Z,8Z,11Z,14Z-eicosatetraenoyl)-4'-phosphopantetheine + adenosine 3',5'-bisphosphate + 2 H(+). It carries out the reaction hexadecanoyl-CoA + H2O = S-hexadecanoyl-4'-phosphopantetheine + adenosine 3',5'-bisphosphate + 2 H(+). In terms of biological role, fatty acyl-coenzyme A (CoA) diphosphatase that hydrolyzes fatty acyl-CoA to yield acyl-4'-phosphopantetheine and adenosine 3',5'-bisphosphate. Preferentially hydrolyzes unsaturated long-chain acyl-CoA substrates such as oleoyl-CoA/(9Z)-octadecenoyl-CoA and arachidonoyl-CoA/(5Z,8Z,11Z,14Z)-eicosatetraenoyl-CoA in the endoplasmic reticulum (ER) lumen. This catalytic activity is required for maintaining ER structure and for lipid droplets (LDs) biogenesis, which are lipid storage organelles involved in maintaining lipid and energy homeostasis. Directly binds to diacylglycerol (DAGs) and triacylglycerol, which is also important for LD biogenesis. May support directional budding of nacent LDs from the ER into the cytosol by reducing DAG levels at sites of LD formation. Plays a role in the regulation of cell morphology and cytoskeletal organization. The chain is Acyl-coenzyme A diphosphatase FITM2 from Bos taurus (Bovine).